A 422-amino-acid chain; its full sequence is Kynurenine--oxoglutarate transaminase 1 (422 aa).

Substrate contacts are provided by G36 and N185. Residue K247 is modified to N6-(pyridoxal phosphate)lysine. Residue R398 participates in substrate binding.

This sequence belongs to the class-I pyridoxal-phosphate-dependent aminotransferase family. In terms of assembly, homodimer. It depends on pyridoxal 5'-phosphate as a cofactor.

It localises to the cytoplasm. It is found in the cytosol. The catalysed reaction is L-kynurenine + 2-oxoglutarate = kynurenate + L-glutamate + H2O. It catalyses the reaction 3-phenylpyruvate + L-glutamine = 2-oxoglutaramate + L-phenylalanine. It carries out the reaction an S-substituted L-cysteine + H2O = a thiol + pyruvate + NH4(+). Its pathway is amino-acid degradation; L-kynurenine degradation; kynurenate from L-kynurenine: step 1/2. Inhibited by tryptophan, indole-3-pyruvic acid, 3-indolepropionic acid, DL-indole-3-lactic acid, indole-3-acetic acid (IAC), amino-oxyacetate (AOAA), aminooxy-phenylpropionic acid (AOPP) and Tris. In terms of biological role, catalyzes the irreversible transamination of the L-tryptophan metabolite L-kynurenine to form kynurenic acid (KA), an intermediate in the tryptophan catabolic pathway which is also a broad spectrum antagonist of the three ionotropic excitatory amino acid receptors among others. Also metabolizes the cysteine conjugates of certain halogenated alkenes and alkanes to form reactive metabolites. Catalyzes the beta-elimination of S-conjugates and Se-conjugates of L-(seleno)cysteine, resulting in the cleavage of the C-S or C-Se bond. The chain is Kynurenine--oxoglutarate transaminase 1 from Homo sapiens (Human).